The chain runs to 252 residues: Triosephosphate isomerase (252 aa).

10–12 provides a ligand contact to substrate; it reads NWK. H96 serves as the catalytic Electrophile. The Proton acceptor role is filled by E168. Substrate is bound by residues G174, S213, and 234-235; that span reads GG.

The protein belongs to the triosephosphate isomerase family. In terms of assembly, homodimer.

The protein resides in the cytoplasm. It carries out the reaction D-glyceraldehyde 3-phosphate = dihydroxyacetone phosphate. Its pathway is carbohydrate biosynthesis; gluconeogenesis. The protein operates within carbohydrate degradation; glycolysis; D-glyceraldehyde 3-phosphate from glycerone phosphate: step 1/1. In terms of biological role, involved in the gluconeogenesis. Catalyzes stereospecifically the conversion of dihydroxyacetone phosphate (DHAP) to D-glyceraldehyde-3-phosphate (G3P). The protein is Triosephosphate isomerase of Nitrosomonas europaea (strain ATCC 19718 / CIP 103999 / KCTC 2705 / NBRC 14298).